The following is a 392-amino-acid chain: FK506-binding protein 4 (392 aa).

2 disordered regions span residues 58-116 (NPEL…NEID) and 161-284 (GNYV…PKTK). 3 stretches are compositionally biased toward acidic residues: residues 73–86 (DGLE…EQEA), 104–116 (SESE…NEID), and 172–219 (SDSD…DASD). 2 positions are modified to phosphoserine: Ser-80 and Ser-82. 2 stretches are compositionally biased toward basic and acidic residues: residues 220-234 (IESR…DEKK) and 252-279 (SAKP…ESKP). One can recognise a PPIase FKBP-type domain in the interval 306 to 392 (GTRVGMRYVG…TFDVKLVSMK (87 aa)).

This sequence belongs to the FKBP-type PPIase family. FKBP3/4 subfamily. As to quaternary structure, binds to histones H3 and H4. Interacts with NOP53.

It is found in the nucleus. It catalyses the reaction [protein]-peptidylproline (omega=180) = [protein]-peptidylproline (omega=0). In terms of biological role, PPIase that acts as a histone chaperone. Histone proline isomerase that increases the rate of cis-trans isomerization at 'Pro-17' (H3P16), 'Pro-31' (H3P30) and 'Pro-39 (H3P38) on the histone H3 N-terminal tail. H3P16 and H3P30 are the major proline targets with little activity shown against H3P38. H3P38 isomerization influences SET2-mediated H3K36 methylation thereby regulating gene expression. This Saccharomyces cerevisiae (strain ATCC 204508 / S288c) (Baker's yeast) protein is FK506-binding protein 4.